Here is a 550-residue protein sequence, read N- to C-terminus: Sorting nexin-33 (550 aa).

The SH3 domain maps to 1 to 61 (MALKARALYS…PASYVEIQSS (61 aa)). A disordered region spans residues 62-152 (RSGSVQVDYS…QDSIASGKRG (91 aa)). The segment covering 86–102 (YDDDDEEDDDDWDDWDD) has biased composition (acidic residues). Positions 128–144 (SRPEYSHRPRPALERQD) are enriched in basic and acidic residues. The region spanning 206-316 (FNCSVEEPTK…HFLGCQDEKQ (111 aa)) is the PX domain. The BAR domain occupies 347–550 (LQDVEERVDV…EKTLHLYDEL (204 aa)).

The protein belongs to the sorting nexin family.

The protein resides in the cytoplasm. The protein localises to the cytosol. Its subcellular location is the membrane. It localises to the cytoplasmic vesicle membrane. Its function is as follows. Plays a role in the reorganization of the cytoskeleton, endocytosis and cellular vesicle trafficking, both during interphase and at the end of mitotic cell divisions. Required for efficient progress through mitosis and cytokinesis. Required for normal formation of the cleavage furrow at the end of mitosis. Modulates endocytosis of cell-surface proteins. Promotes membrane tubulation (in vitro). May promote the formation of macropinosomes. This chain is Sorting nexin-33 (snx33), found in Xenopus laevis (African clawed frog).